A 150-amino-acid chain; its full sequence is Nitric oxide reductase subunit C (150 aa).

A helical; Signal-anchor transmembrane segment spans residues 13-29; it reads IFYGGSLFFFLLFAALT. The heme c site is built by Cys-62, Cys-65, and His-66.

As to quaternary structure, heterodimer of cytochromes b (large subunit) and c (small subunit).

It localises to the cell membrane. Its function is as follows. Component of the anaerobic respiratory chain that transforms nitrate to dinitrogen (denitrification). The protein is Nitric oxide reductase subunit C (norC) of Halomonas halodenitrificans (Paracoccus halodenitrificans).